We begin with the raw amino-acid sequence, 132 residues long: Phosphomevalonate dehydratase small subunit (132 aa).

Residue S61 is the Proton acceptor of the active site.

This sequence belongs to the AcnX type II small subunit family. As to quaternary structure, heterodimer composed of a large subunit (PMDh-L) and a small subunit (PMDh-S).

The enzyme catalyses (R)-5-phosphomevalonate = (2E)-3-methyl-5-phosphooxypent-2-enoate + H2O. The protein operates within isoprenoid biosynthesis; isopentenyl diphosphate biosynthesis via mevalonate pathway. Component of a hydro-lyase that catalyzes the dehydration of mevalonate 5-phosphate (MVA5P) to form trans-anhydromevalonate 5-phosphate (tAHMP). Involved in the archaeal mevalonate (MVA) pathway, which provides fundamental precursors for isoprenoid biosynthesis, such as isopentenyl diphosphate (IPP) and dimethylallyl diphosphate (DMAPP). This chain is Phosphomevalonate dehydratase small subunit, found in Archaeoglobus fulgidus (strain ATCC 49558 / DSM 4304 / JCM 9628 / NBRC 100126 / VC-16).